Here is a 275-residue protein sequence, read N- to C-terminus: Dihydropteroate synthase (275 aa).

The Pterin-binding domain occupies 15–267; sequence PQIMGILNFT…DVAATSDMLK (253 aa). Residue Asn-22 coordinates Mg(2+). (7,8-dihydropterin-6-yl)methyl diphosphate contacts are provided by residues Thr-62, Asp-96, Asn-115, Asp-185, Lys-221, and 255 to 257; that span reads RVH.

This sequence belongs to the DHPS family. As to quaternary structure, homodimer. Requires Mg(2+) as cofactor.

It carries out the reaction (7,8-dihydropterin-6-yl)methyl diphosphate + 4-aminobenzoate = 7,8-dihydropteroate + diphosphate. Its pathway is cofactor biosynthesis; tetrahydrofolate biosynthesis; 7,8-dihydrofolate from 2-amino-4-hydroxy-6-hydroxymethyl-7,8-dihydropteridine diphosphate and 4-aminobenzoate: step 1/2. Its function is as follows. Catalyzes the condensation of para-aminobenzoate (pABA) with 6-hydroxymethyl-7,8-dihydropterin diphosphate (DHPt-PP) to form 7,8-dihydropteroate (H2Pte), the immediate precursor of folate derivatives. The polypeptide is Dihydropteroate synthase (folP-A) (Haemophilus influenzae (strain ATCC 51907 / DSM 11121 / KW20 / Rd)).